Reading from the N-terminus, the 295-residue chain is Golgi-associated RAB2 interactor protein 1A (295 aa).

The disordered stretch occupies residues 187–206; that stretch reads MPNSSTETTPESSRPASSQS. Positions 190-206 are enriched in low complexity; the sequence is SSTETTPESSRPASSQS. Residues serine 220, serine 221, serine 251, and serine 255 each carry the phosphoserine modification.

It belongs to the GARIN family. As to quaternary structure, interacts (via N-terminus) with RAB2B (in GTP-bound form).

It localises to the golgi apparatus. Its function is as follows. RAB2B effector protein required for accurate acrosome formation and normal male fertility. The protein is Golgi-associated RAB2 interactor protein 1A (Garin1a) of Rattus norvegicus (Rat).